We begin with the raw amino-acid sequence, 144 residues long: Maximins 1/H1 (144 aa).

An N-terminal signal peptide occupies residues 1–18 (MNFKYIVAVSFLLASAYA). The propeptide occupies 19-43 (RSEENDEQSLSQRDVLEEESLREIR). Residue Asn70 is modified to Asparagine amide. Positions 74–123 (TAEEHEVMKRLEAVMRDLDSLDYPEEAAERETRSFNQEEIANLFTKKEKR) are excised as a propeptide. Leu143 bears the Leucine amide mark.

It belongs to the bombinin family. Expressed by the skin glands.

It is found in the secreted. Functionally, antibacterial peptide with amphipathic alpha-helical structure that has activity against both Gram-positive and Gram-negative bacteria. Also shows antimicrobial activity against the fungus C.albicans, but not against A.flavus nor P.uticale. It has little hemolytic activity. It possess a significant cytotoxicity against tumor cell lines, but does not possess a significant anti-HIV activity. Also shows high spermicidal activity. Its function is as follows. antibacterial peptide with activity against both Gram-positive and Gram-negative bacteria. Also shows antimicrobial activity against the fungus C.albicans. In addition, shows strong hemolytic activity. This is Maximins 1/H1 from Bombina maxima (Giant fire-bellied toad).